We begin with the raw amino-acid sequence, 707 residues long: Acyl-CoA ligase 891, peroxisomal (707 aa).

259 to 270 (INYTSGTTGPPK) contacts ATP. A fatty acid-binding region spans residues 525–549 (DGWFRTGDVCTIDEKGRFIIIDRRK). Residues 705–707 (AKL) carry the Peroxisome targeting signal motif.

It belongs to the ATP-dependent AMP-binding enzyme family.

It localises to the peroxisome matrix. It catalyses the reaction (4E,8E)-10-(4-hydroxy-6-methoxy-7-methyl-3-oxo-1,3-dihydro-2-benzofuran-5-yl)-4,8-dimethyldeca-4,8-dienoate + ATP + CoA = (4E,8E)-10-(4-hydroxy-6-methoxy-7-methyl-3-oxo-1,3-dihydro-2-benzofuran-5-yl)-4,8-dimethyldeca-4,8-dienoyl-CoA + AMP + diphosphate. Its pathway is secondary metabolite biosynthesis; terpenoid biosynthesis. In terms of biological role, acyl-CoA ligase involved in the biosynthesis of mycophenolic acid (MPA), the first isolated antibiotic natural product in the world obtained from a culture of Penicillium brevicompactum in 1893. The peroxisomal acyl-CoA ligase 891 converts the intermediate MFDHMP-3C into MFDHMP-3C-CoA which impairs its diffusion from the peroxisome. The first step of the pathway is the synthesis of 5-methylorsellinic acid (5MOA) by the cytosolic polyketide synthase mpaC. 5MOA is then converted to the phthalide compound 5,7-dihydroxy-4,6-dimethylphthalide (DHMP) by the endoplasmic reticulum-bound cytochrome P450 monooxygenase mpaDE. MpaDE first catalyzes hydroxylation of 5-MOA to 4,6-dihydroxy-2-(hydroxymethyl)-3-methylbenzoic acid (DHMB). MpaDE then acts as a lactone synthase that catalyzes the ring closure to convert DHMB into DHMP. The next step is the prenylation of DHMP by the Golgi apparatus-associated prenyltransferase mpaA to yield farnesyl-DHMP (FDHMP). The ER-bound oxygenase mpaB then mediates the oxidative cleavage the C19-C20 double bond in FDHMP to yield FDHMP-3C via a mycophenolic aldehyde intermediate. The O-methyltransferase mpaG catalyzes the methylation of FDHMP-3C to yield MFDHMP-3C. After the cytosolic methylation of FDHMP-3C, MFDHMP-3C enters into peroxisomes probably via free diffusion due to its low molecular weight. Upon a peroxisomal CoA ligation reaction, catalyzed by a beta-oxidation component enzyme acyl-CoA ligase ACL891, MFDHMP-3C-CoA would then be restricted to peroxisomes for the following beta-oxidation pathway steps. The peroxisomal beta-oxidation machinery than converts MFDHMP-3C-CoA into MPA_CoA, via a beta-oxidation chain-shortening process. Finally mpaH acts as a peroxisomal acyl-CoA hydrolase with high substrate specificity toward MPA-CoA to release the final product MPA. The protein is Acyl-CoA ligase 891, peroxisomal of Penicillium roqueforti (strain FM164).